The primary structure comprises 279 residues: MSDSAYNPGQDGAKMGFADAMSYGDYLHLDALLDQQHCKSDAHDEMLFIIQHQTSELWMKLALHELQAAREALQQGQTAEMFKMLARVSRIFEQLNSAWDVLRTMTPADYTRFREALGPSSGFQSYQYRLIEYVLGNRNPNMLRPHEHVPEVHALLSAELARPSFYDEVNRYLFQTLDGHTENLPAPRLDAPHALDETIQERWLKVYGDIDTYWTLYELAEKLVDLEDYFRRWRFNHVTTVERVIGFKRGTGGTSGVQYLRRMLSVELFPELWTLRGDL.

Residues 48–52 (FIIQH), Y110, and R114 each bind substrate. Heme is bound at residue H237. T251 serves as a coordination point for substrate.

This sequence belongs to the tryptophan 2,3-dioxygenase family. As to quaternary structure, homotetramer. Requires heme as cofactor.

It carries out the reaction L-tryptophan + O2 = N-formyl-L-kynurenine. It functions in the pathway amino-acid degradation; L-tryptophan degradation via kynurenine pathway; L-kynurenine from L-tryptophan: step 1/2. In terms of biological role, heme-dependent dioxygenase that catalyzes the oxidative cleavage of the L-tryptophan (L-Trp) pyrrole ring and converts L-tryptophan to N-formyl-L-kynurenine. Catalyzes the oxidative cleavage of the indole moiety. The polypeptide is Tryptophan 2,3-dioxygenase (Ruegeria sp. (strain TM1040) (Silicibacter sp.)).